The following is a 98-amino-acid chain: Small ribosomal subunit protein bS18c (98 aa).

Positions 1 to 13 (MSKQSFDFKRYKP) are enriched in basic and acidic residues. The tract at residues 1–26 (MSKQSFDFKRYKPEAPSGSRKRPLKK) is disordered.

The protein belongs to the bacterial ribosomal protein bS18 family. Part of the 30S ribosomal subunit.

Its subcellular location is the plastid. It localises to the chloroplast. The sequence is that of Small ribosomal subunit protein bS18c from Gnetum parvifolium (Small-leaved jointfir).